The sequence spans 67 residues: DNA-directed RNA polymerase subunit omega (67 aa).

The protein belongs to the RNA polymerase subunit omega family. The RNAP catalytic core consists of 2 alpha, 1 beta, 1 beta' and 1 omega subunit. When a sigma factor is associated with the core the holoenzyme is formed, which can initiate transcription.

The enzyme catalyses RNA(n) + a ribonucleoside 5'-triphosphate = RNA(n+1) + diphosphate. Promotes RNA polymerase assembly. Latches the N- and C-terminal regions of the beta' subunit thereby facilitating its interaction with the beta and alpha subunits. The polypeptide is DNA-directed RNA polymerase subunit omega (Bordetella pertussis (strain Tohama I / ATCC BAA-589 / NCTC 13251)).